Consider the following 479-residue polypeptide: Probable polyamine transporter At3g19553 (479 aa).

A run of 12 helical transmembrane segments spans residues 22–42 (LTLL…PFGV), 53–73 (LLAL…EALV), 86–106 (GYVV…EGFW), 130–150 (FPVL…TFSL), 160–180 (IVGF…VVMA), 236–256 (ALFG…MAGT), 275–295 (VGML…AAMS), 304–324 (MSSD…PAFF), 332–352 (TPTI…WMSF), 355–375 (IIEF…AAFV), 395–415 (FGVS…MVLA), and 420–440 (FLIS…LTLV). The tract at residues 454–479 (RPVSGVSSESQLDEEHGDESAASLLP) is disordered.

It belongs to the amino acid-polyamine-organocation (APC) superfamily. Polyamine:cation symporter (PHS) (TC 2.A.3.12) family.

It is found in the cell membrane. In terms of biological role, probable cell membrane polyamine/proton symporter involved in the polyamine uptake in cells. In Arabidopsis thaliana (Mouse-ear cress), this protein is Probable polyamine transporter At3g19553.